The chain runs to 178 residues: Large ribosomal subunit protein bL17 (178 aa).

Residues 126–139 show a composition bias toward basic and acidic residues; sequence DRARRVAASKKAEE. Residues 126 to 178 form a disordered region; the sequence is DRARRVAASKKAEEQAPAAEAEEQAPAAEAEAPAADAAAEAKADEAAEDKKDA. Low complexity predominate over residues 140 to 163; sequence QAPAAEAEEQAPAAEAEAPAADAA. Over residues 164-178 the composition is skewed to basic and acidic residues; that stretch reads AEAKADEAAEDKKDA.

It belongs to the bacterial ribosomal protein bL17 family. Part of the 50S ribosomal subunit. Contacts protein L32.

The chain is Large ribosomal subunit protein bL17 from Nocardia farcinica (strain IFM 10152).